Reading from the N-terminus, the 179-residue chain is Large ribosomal subunit protein uL6 (179 aa).

The protein belongs to the universal ribosomal protein uL6 family. Part of the 50S ribosomal subunit.

Functionally, this protein binds to the 23S rRNA, and is important in its secondary structure. It is located near the subunit interface in the base of the L7/L12 stalk, and near the tRNA binding site of the peptidyltransferase center. This is Large ribosomal subunit protein uL6 from Mycobacteroides abscessus (strain ATCC 19977 / DSM 44196 / CCUG 20993 / CIP 104536 / JCM 13569 / NCTC 13031 / TMC 1543 / L948) (Mycobacterium abscessus).